We begin with the raw amino-acid sequence, 384 residues long: Cell division protein FtsZ (384 aa).

Residues 20-24 (GGGGN), 107-109 (GTG), Glu-138, Arg-142, and Asn-186 each bind GTP.

It belongs to the FtsZ family. Homodimer. Polymerizes to form a dynamic ring structure in a strictly GTP-dependent manner. Interacts directly with several other division proteins.

The protein resides in the cytoplasm. Its function is as follows. Essential cell division protein that forms a contractile ring structure (Z ring) at the future cell division site. The regulation of the ring assembly controls the timing and the location of cell division. One of the functions of the FtsZ ring is to recruit other cell division proteins to the septum to produce a new cell wall between the dividing cells. Binds GTP and shows GTPase activity. This is Cell division protein FtsZ from Wigglesworthia glossinidia brevipalpis.